A 171-amino-acid chain; its full sequence is Small ribosomal subunit protein uS4 (171 aa).

The region spanning 103-167 (RRLQTLVHKR…SPMKKQIEAA (65 aa)) is the S4 RNA-binding domain.

Belongs to the universal ribosomal protein uS4 family. Part of the 30S ribosomal subunit. Contacts protein S5. The interaction surface between S4 and S5 is involved in control of translational fidelity.

Functionally, one of the primary rRNA binding proteins, it binds directly to 16S rRNA where it nucleates assembly of the body of the 30S subunit. In terms of biological role, with S5 and S12 plays an important role in translational accuracy. The sequence is that of Small ribosomal subunit protein uS4 from Methanothermobacter thermautotrophicus (strain ATCC 29096 / DSM 1053 / JCM 10044 / NBRC 100330 / Delta H) (Methanobacterium thermoautotrophicum).